The sequence spans 310 residues: ATP phosphoribosyltransferase (310 aa).

Belongs to the ATP phosphoribosyltransferase family.

Its subcellular location is the cytoplasm. The catalysed reaction is 1-(5-phospho-beta-D-ribosyl)-ATP + diphosphate = 5-phospho-alpha-D-ribose 1-diphosphate + ATP. It participates in amino-acid biosynthesis; L-histidine biosynthesis; L-histidine from 5-phospho-alpha-D-ribose 1-diphosphate: step 1/9. Catalyzes the condensation of ATP and 5-phosphoribose 1-diphosphate to form N'-(5'-phosphoribosyl)-ATP (PR-ATP). Has a crucial role in the pathway because the rate of histidine biosynthesis seems to be controlled primarily by regulation of HisG enzymatic activity. The sequence is that of ATP phosphoribosyltransferase (his1) from Schizosaccharomyces pombe (strain 972 / ATCC 24843) (Fission yeast).